A 484-amino-acid polypeptide reads, in one-letter code: tRNA-2-methylthio-N(6)-dimethylallyladenosine synthase (484 aa).

The region spanning 36-153 is the MTTase N-terminal domain; it reads GKLYIKTHGC…LPELIRARRE (118 aa). The [4Fe-4S] cluster site is built by cysteine 45, cysteine 82, cysteine 116, cysteine 190, cysteine 194, and cysteine 197. The Radical SAM core domain maps to 176–415; that stretch reads RAEGPSAFVS…HISAHAASIS (240 aa). A TRAM domain is found at 416 to 479; it reads QSMVGSVQRV…SNSLRGRIQL (64 aa). The tract at residues 428–450 is disordered; it reads EGPSRRDPNELTGKSENMRPVNF.

It belongs to the methylthiotransferase family. MiaB subfamily. Monomer. [4Fe-4S] cluster is required as a cofactor.

It is found in the cytoplasm. The enzyme catalyses N(6)-dimethylallyladenosine(37) in tRNA + (sulfur carrier)-SH + AH2 + 2 S-adenosyl-L-methionine = 2-methylsulfanyl-N(6)-dimethylallyladenosine(37) in tRNA + (sulfur carrier)-H + 5'-deoxyadenosine + L-methionine + A + S-adenosyl-L-homocysteine + 2 H(+). Catalyzes the methylthiolation of N6-(dimethylallyl)adenosine (i(6)A), leading to the formation of 2-methylthio-N6-(dimethylallyl)adenosine (ms(2)i(6)A) at position 37 in tRNAs that read codons beginning with uridine. The sequence is that of tRNA-2-methylthio-N(6)-dimethylallyladenosine synthase from Xanthomonas oryzae pv. oryzae (strain MAFF 311018).